The sequence spans 628 residues: Beta-galactosidase large subunit (628 aa).

The Proton donor role is filled by Glu-468. Glu-536 acts as the Nucleophile in catalysis.

It belongs to the glycosyl hydrolase 2 family. In terms of assembly, heterodimer of a large (LacL) and a small subunit (LacM).

It carries out the reaction Hydrolysis of terminal non-reducing beta-D-galactose residues in beta-D-galactosides.. Its function is as follows. Component of a beta-galactosidase. This is Beta-galactosidase large subunit from Lactobacillus helveticus (Lactobacillus suntoryeus).